The following is a 72-amino-acid chain: UPF0154 protein BPUM_1692 (72 aa).

Residues tryptophan 4 to isoleucine 24 form a helical membrane-spanning segment.

It belongs to the UPF0154 family.

It localises to the cell membrane. The protein is UPF0154 protein BPUM_1692 of Bacillus pumilus (strain SAFR-032).